The sequence spans 457 residues: Siroheme synthase (457 aa).

The precorrin-2 dehydrogenase /sirohydrochlorin ferrochelatase stretch occupies residues 1-204; sequence MDHLPIFCQL…NDQKAITETT (204 aa). Residues 22-23 and 43-44 each bind NAD(+); these read DV and LA. A Phosphoserine modification is found at serine 128. The tract at residues 216 to 457 is uroporphyrinogen-III C-methyltransferase; that stretch reads GEVVLVGAGP…RDKLNWFSNH (242 aa). Proline 225 is a binding site for S-adenosyl-L-methionine. Catalysis depends on aspartate 248, which acts as the Proton acceptor. The active-site Proton donor is lysine 270. S-adenosyl-L-methionine-binding positions include 301 to 303, isoleucine 306, 331 to 332, methionine 382, and glycine 411; these read GGD and TA.

In the N-terminal section; belongs to the precorrin-2 dehydrogenase / sirohydrochlorin ferrochelatase family. The protein in the C-terminal section; belongs to the precorrin methyltransferase family.

The catalysed reaction is uroporphyrinogen III + 2 S-adenosyl-L-methionine = precorrin-2 + 2 S-adenosyl-L-homocysteine + H(+). It catalyses the reaction precorrin-2 + NAD(+) = sirohydrochlorin + NADH + 2 H(+). The enzyme catalyses siroheme + 2 H(+) = sirohydrochlorin + Fe(2+). It functions in the pathway cofactor biosynthesis; adenosylcobalamin biosynthesis; precorrin-2 from uroporphyrinogen III: step 1/1. It participates in cofactor biosynthesis; adenosylcobalamin biosynthesis; sirohydrochlorin from precorrin-2: step 1/1. The protein operates within porphyrin-containing compound metabolism; siroheme biosynthesis; precorrin-2 from uroporphyrinogen III: step 1/1. Its pathway is porphyrin-containing compound metabolism; siroheme biosynthesis; siroheme from sirohydrochlorin: step 1/1. It functions in the pathway porphyrin-containing compound metabolism; siroheme biosynthesis; sirohydrochlorin from precorrin-2: step 1/1. Multifunctional enzyme that catalyzes the SAM-dependent methylations of uroporphyrinogen III at position C-2 and C-7 to form precorrin-2 via precorrin-1. Then it catalyzes the NAD-dependent ring dehydrogenation of precorrin-2 to yield sirohydrochlorin. Finally, it catalyzes the ferrochelation of sirohydrochlorin to yield siroheme. The protein is Siroheme synthase of Escherichia coli O8 (strain IAI1).